A 383-amino-acid polypeptide reads, in one-letter code: Anhydro-N-acetylmuramic acid kinase (383 aa).

An ATP-binding site is contributed by 9-16 (GTSLDGID).

The protein belongs to the anhydro-N-acetylmuramic acid kinase family.

It carries out the reaction 1,6-anhydro-N-acetyl-beta-muramate + ATP + H2O = N-acetyl-D-muramate 6-phosphate + ADP + H(+). It functions in the pathway amino-sugar metabolism; 1,6-anhydro-N-acetylmuramate degradation. It participates in cell wall biogenesis; peptidoglycan recycling. Its function is as follows. Catalyzes the specific phosphorylation of 1,6-anhydro-N-acetylmuramic acid (anhMurNAc) with the simultaneous cleavage of the 1,6-anhydro ring, generating MurNAc-6-P. Is required for the utilization of anhMurNAc either imported from the medium or derived from its own cell wall murein, and thus plays a role in cell wall recycling. In Clostridioides difficile (strain 630) (Peptoclostridium difficile), this protein is Anhydro-N-acetylmuramic acid kinase.